Consider the following 596-residue polypeptide: 3-hydroxy-3-methylglutaryl-coenzyme A reductase 1 (596 aa).

Positions 1 to 29 (MDVRRRPVKPLYTSKDASAGEPLKQQEVS) are disordered. 2 helical membrane-spanning segments follow: residues 41–61 (LYLT…FLLV) and 83–103 (AMVS…IGFV). Positions 104–183 (QSFVSRSNSD…SPIIMPALSE (80 aa)) are linker. The interval 184-596 (DDEEIIQSVV…YNRSIKDISK (413 aa)) is catalytic. Residue Glu278 is the Charge relay system of the active site. Residue Asn342 is glycosylated (N-linked (GlcNAc...) asparagine). The active-site Charge relay system is Lys410. An N-linked (GlcNAc...) asparagine glycan is attached at Asn455. Asp486 (charge relay system) is an active-site residue. His584 functions as the Proton donor in the catalytic mechanism. A glycan (N-linked (GlcNAc...) asparagine) is linked at Asn588.

It belongs to the HMG-CoA reductase family. As to expression, expressed in flower primordia and anthers.

Its subcellular location is the endoplasmic reticulum membrane. It carries out the reaction (R)-mevalonate + 2 NADP(+) + CoA = (3S)-3-hydroxy-3-methylglutaryl-CoA + 2 NADPH + 2 H(+). It participates in metabolic intermediate biosynthesis; (R)-mevalonate biosynthesis; (R)-mevalonate from acetyl-CoA: step 3/3. Catalyzes the synthesis of mevalonate. The specific precursor of all isoprenoid compounds present in plants. The sequence is that of 3-hydroxy-3-methylglutaryl-coenzyme A reductase 1 (HMG1) from Solanum tuberosum (Potato).